A 355-amino-acid polypeptide reads, in one-letter code: Probable poly-beta-1,6-N-acetyl-D-glucosamine export protein (355 aa).

Helical transmembrane passes span 13-30 (AFIC…QITL), 45-67 (YIRN…LTTL), 74-96 (INYL…LFYS), 116-138 (VLGQ…SYII), 145-167 (LFNS…HYFL), 187-204 (MILG…IGYN), 211-233 (FLEK…FIAV), 243-262 (SFTY…LLGV), 269-291 (MLLN…HPII), and 306-328 (TIVF…GMML).

Belongs to the acyltransferase 3 family.

The protein resides in the cell membrane. Presumably involved in the export of the biofilm adhesin polysaccharide poly-beta-1,6-N-acetyl-D-glucosamine (PNAG, also referred to as PIA) across the cell membrane. The protein is Probable poly-beta-1,6-N-acetyl-D-glucosamine export protein (icaC) of Staphylococcus epidermidis.